A 301-amino-acid chain; its full sequence is XIAP-associated factor 1 (301 aa).

The TRAF-type zinc-finger motif lies at 22 to 99 (LHEAYCLRFL…KLDMQLSKLE (78 aa)). A disordered region spans residues 189 to 257 (ILPSSLPSQA…KPRTSSPRGD (69 aa)). The span at 193–205 (SLPSQAAENQTST) shows a compositional bias: polar residues.

In terms of assembly, interacts with BIRC4; the interaction is not detected in. Interacts with BIRC1, BIRC2, BIRC3, BIRC7 and BIRC8. Part of an complex consisting of BIRC4, XAF1 and BIRC5; the complex formation requires IFN-beta stimulation. Interacts with RNF114, the interaction increases XAF1 stability and proapoptotic effects, and may regulate IFN signaling. Widely expressed. Expression is frequently down-regulated in cancer cell lines. Isoform 5 is widely expressed. Expressed in placenta (at protein level).

Its subcellular location is the cytoplasm. It is found in the nucleus. The protein localises to the mitochondrion. Its function is as follows. Seems to function as a negative regulator of members of the IAP (inhibitor of apoptosis protein) family. Inhibits anti-caspase activity of BIRC4. Induces cleavage and inactivation of BIRC4 independent of caspase activation. Mediates TNF-alpha-induced apoptosis and is involved in apoptosis in trophoblast cells. May inhibit BIRC4 indirectly by activating the mitochondrial apoptosis pathway. After translocation to mitochondria, promotes translocation of BAX to mitochondria and cytochrome c release from mitochondria. Seems to promote the redistribution of BIRC4 from the cytoplasm to the nucleus, probably independent of BIRC4 inactivation which seems to occur in the cytoplasm. The BIRC4-XAF1 complex mediates down-regulation of BIRC5/survivin; the process requires the E3 ligase activity of BIRC4. Seems to be involved in cellular sensitivity to the proapoptotic actions of TRAIL. May be a tumor suppressor by mediating apoptosis resistance of cancer cells. This Homo sapiens (Human) protein is XIAP-associated factor 1 (XAF1).